Reading from the N-terminus, the 218-residue chain is Adenylate kinase (218 aa).

10–15 (GAGKGT) is a binding site for ATP. The NMP stretch occupies residues 30 to 59 (STGDMLRAAVKAGSPLGLKVKDIMTSGGLV). Residues Thr31, Arg36, 57–59 (GLV), 85–88 (GFPR), and Gln92 each bind AMP. Residues 122 to 159 (GRRVHEASGRVYHVKHNAPKTEGVDDETGEPLVQRDDD) are LID. Residues Arg123 and 132-133 (VY) each bind ATP. Positions 156 and 167 each coordinate AMP. Gly203 is a binding site for ATP.

The protein belongs to the adenylate kinase family. In terms of assembly, monomer.

Its subcellular location is the cytoplasm. The catalysed reaction is AMP + ATP = 2 ADP. Its pathway is purine metabolism; AMP biosynthesis via salvage pathway; AMP from ADP: step 1/1. Catalyzes the reversible transfer of the terminal phosphate group between ATP and AMP. Plays an important role in cellular energy homeostasis and in adenine nucleotide metabolism. This is Adenylate kinase from Saccharophagus degradans (strain 2-40 / ATCC 43961 / DSM 17024).